The sequence spans 360 residues: NAD(P)H-quinone oxidoreductase subunit 1, chloroplastic (360 aa).

Transmembrane regions (helical) follow at residues 30-50, 98-118, 127-147, 165-185, 203-223, 248-268, 297-317, and 340-360; these read FLPIFSLVLGILTGVLVLVWL, FSIGPSIAVISILLSYSVIPF, FNIGIFLWIAISSIAPIGLLM, AAQSISYEIPLTLCLLSISLL, FWGWNLWRQPIGFIIFLISSL, YSGIKFGLFYVASYLNLLISS, IFGTTIGIFITLAKTYLFLFI, and FLLPISLGNLLLTTSFQVFSL.

This sequence belongs to the complex I subunit 1 family. NDH is composed of at least 16 different subunits, 5 of which are encoded in the nucleus.

It is found in the plastid. The protein localises to the chloroplast thylakoid membrane. It carries out the reaction a plastoquinone + NADH + (n+1) H(+)(in) = a plastoquinol + NAD(+) + n H(+)(out). It catalyses the reaction a plastoquinone + NADPH + (n+1) H(+)(in) = a plastoquinol + NADP(+) + n H(+)(out). In terms of biological role, NDH shuttles electrons from NAD(P)H:plastoquinone, via FMN and iron-sulfur (Fe-S) centers, to quinones in the photosynthetic chain and possibly in a chloroplast respiratory chain. The immediate electron acceptor for the enzyme in this species is believed to be plastoquinone. Couples the redox reaction to proton translocation, and thus conserves the redox energy in a proton gradient. The sequence is that of NAD(P)H-quinone oxidoreductase subunit 1, chloroplastic from Aethionema grandiflorum (Persian stone-cress).